The chain runs to 235 residues: Leucyl/phenylalanyl-tRNA--protein transferase (235 aa).

It belongs to the L/F-transferase family.

Its subcellular location is the cytoplasm. The enzyme catalyses N-terminal L-lysyl-[protein] + L-leucyl-tRNA(Leu) = N-terminal L-leucyl-L-lysyl-[protein] + tRNA(Leu) + H(+). The catalysed reaction is N-terminal L-arginyl-[protein] + L-leucyl-tRNA(Leu) = N-terminal L-leucyl-L-arginyl-[protein] + tRNA(Leu) + H(+). It catalyses the reaction L-phenylalanyl-tRNA(Phe) + an N-terminal L-alpha-aminoacyl-[protein] = an N-terminal L-phenylalanyl-L-alpha-aminoacyl-[protein] + tRNA(Phe). Its function is as follows. Functions in the N-end rule pathway of protein degradation where it conjugates Leu, Phe and, less efficiently, Met from aminoacyl-tRNAs to the N-termini of proteins containing an N-terminal arginine or lysine. In Aeromonas hydrophila subsp. hydrophila (strain ATCC 7966 / DSM 30187 / BCRC 13018 / CCUG 14551 / JCM 1027 / KCTC 2358 / NCIMB 9240 / NCTC 8049), this protein is Leucyl/phenylalanyl-tRNA--protein transferase.